Consider the following 270-residue polypeptide: tRNA pseudouridine synthase A (270 aa).

Residue aspartate 60 is the Nucleophile of the active site. The tract at residues 107–111 (FHARF) is RNA binding. Tyrosine 118 is a substrate binding site. Positions 168–172 (QCQSR) are interaction with tRNA.

The protein belongs to the tRNA pseudouridine synthase TruA family. In terms of assembly, homodimer.

The enzyme catalyses uridine(38/39/40) in tRNA = pseudouridine(38/39/40) in tRNA. Formation of pseudouridine at positions 38, 39 and 40 in the anticodon stem and loop of transfer RNAs. The chain is tRNA pseudouridine synthase A from Escherichia fergusonii (strain ATCC 35469 / DSM 13698 / CCUG 18766 / IAM 14443 / JCM 21226 / LMG 7866 / NBRC 102419 / NCTC 12128 / CDC 0568-73).